We begin with the raw amino-acid sequence, 550 residues long: NAD(P)H-quinone oxidoreductase chain 4 3 (550 aa).

The next 14 helical transmembrane spans lie at 5-25 (FPWL…IPLL), 36-56 (YALI…WQHF), 86-106 (ISAP…FSAW), 114-134 (LFYA…VAKD), 135-155 (LFLF…LVCI), 168-188 (FLLY…ALSL), 212-232 (MWLY…FPLH), 243-263 (SSPV…YGLM), 277-297 (FAPL…FSSF), 311-331 (VSHM…GING), 332-352 (AMLQ…LAGV), 375-395 (VFAM…MSGF), 418-438 (ITVF…LSML), and 489-509 (IFIA…PKLL).

It belongs to the complex I subunit 4 family.

It localises to the cellular thylakoid membrane. It catalyses the reaction a plastoquinone + NADH + (n+1) H(+)(in) = a plastoquinol + NAD(+) + n H(+)(out). The catalysed reaction is a plastoquinone + NADPH + (n+1) H(+)(in) = a plastoquinol + NADP(+) + n H(+)(out). In terms of biological role, NDH-1 shuttles electrons from NAD(P)H, via FMN and iron-sulfur (Fe-S) centers, to quinones in the respiratory chain. The immediate electron acceptor for the enzyme in this species is believed to be plastoquinone. Couples the redox reaction to proton translocation (for every two electrons transferred, four hydrogen ions are translocated across the cytoplasmic membrane), and thus conserves the redox energy in a proton gradient. The sequence is that of NAD(P)H-quinone oxidoreductase chain 4 3 from Picosynechococcus sp. (strain ATCC 27264 / PCC 7002 / PR-6) (Agmenellum quadruplicatum).